Here is a 321-residue protein sequence, read N- to C-terminus: Anthranilate phosphoribosyltransferase (321 aa).

5-phospho-alpha-D-ribose 1-diphosphate contacts are provided by residues Gly72, Gly75–Asp76, Thr80, Asn82–Thr85, Lys99–Ser107, and Ser111. Residue Gly72 coordinates anthranilate. Ser84 is a Mg(2+) binding site. Residue Asn102 coordinates anthranilate. Arg157 contributes to the anthranilate binding site. Residues Asp216 and Glu217 each coordinate Mg(2+).

Belongs to the anthranilate phosphoribosyltransferase family. In terms of assembly, homodimer. Mg(2+) is required as a cofactor.

It catalyses the reaction N-(5-phospho-beta-D-ribosyl)anthranilate + diphosphate = 5-phospho-alpha-D-ribose 1-diphosphate + anthranilate. It participates in amino-acid biosynthesis; L-tryptophan biosynthesis; L-tryptophan from chorismate: step 2/5. Functionally, catalyzes the transfer of the phosphoribosyl group of 5-phosphorylribose-1-pyrophosphate (PRPP) to anthranilate to yield N-(5'-phosphoribosyl)-anthranilate (PRA). This chain is Anthranilate phosphoribosyltransferase, found in Methanococcus maripaludis (strain C7 / ATCC BAA-1331).